The sequence spans 756 residues: 3-O-alpha-D-glucosyl-L-rhamnose phosphorylase (756 aa).

358-359 contacts substrate; the sequence is WD. Glutamate 486 acts as the Proton donor in catalysis. Residue 590 to 591 coordinates substrate; it reads KQ.

The protein belongs to the glycosyl hydrolase 65 family. Monomer.

It is found in the cytoplasm. It carries out the reaction 3-O-alpha-D-glucosyl-L-rhamnose + phosphate = beta-D-glucose 1-phosphate + L-rhamnopyranose. Phosphorylase showing strict alpha-1,3-regioselectivity and producing 3-O-alpha-D-glucopyranosyl-L-rhamnopyranose. Specific for L-rhamnose as acceptor and beta-D-glucose 1-phosphate as donor. Does not phosphorylate alpha,alpha-trehalose, kojibiose, nigerose, or maltose. The polypeptide is 3-O-alpha-D-glucosyl-L-rhamnose phosphorylase (Lachnoclostridium phytofermentans (strain ATCC 700394 / DSM 18823 / ISDg) (Clostridium phytofermentans)).